A 51-amino-acid chain; its full sequence is Sperm protamine P1 (51 aa).

The protein belongs to the protamine P1 family. In terms of tissue distribution, testis.

It is found in the nucleus. The protein localises to the chromosome. Protamines substitute for histones in the chromatin of sperm during the haploid phase of spermatogenesis. They compact sperm DNA into a highly condensed, stable and inactive complex. This chain is Sperm protamine P1 (PRM1), found in Macaca mulatta (Rhesus macaque).